Reading from the N-terminus, the 111-residue chain is UPF0145 protein RBAM_010660 (111 aa).

Belongs to the UPF0145 family.

This is UPF0145 protein RBAM_010660 from Bacillus velezensis (strain DSM 23117 / BGSC 10A6 / LMG 26770 / FZB42) (Bacillus amyloliquefaciens subsp. plantarum).